The following is a 104-amino-acid chain: Secretoglobin family 3A member 1 (104 aa).

Positions 1–21 (MKLTTTFLVLCVALLSDSGVA) are cleaved as a signal peptide.

This sequence belongs to the secretoglobin family. UGRP subfamily. Homodimer; disulfide-linked. As to expression, highly expressed in lung, where it localizes to epithelial cells lining the trachea and bronchi. Expression in lung is mainly restricted to bronchi, submucosal glands of the trachea, and tracheal epithelium, with little expression in terminal bronchioles. Expressed in uterus where it localizes to epithelial cells of the uterine glands. Also detected in heart, stomach and small intestine.

It localises to the secreted. Its function is as follows. Secreted cytokine-like protein. Inhibits cell growth in vitro. In Mus musculus (Mouse), this protein is Secretoglobin family 3A member 1 (Scgb3a1).